The primary structure comprises 181 residues: Shikimate kinase (181 aa).

Glycine 17–threonine 22 is a binding site for ATP. Position 21 (threonine 21) interacts with Mg(2+). Substrate contacts are provided by aspartate 39, arginine 63, and glycine 85. Arginine 122 lines the ATP pocket. Substrate is bound at residue arginine 141.

The protein belongs to the shikimate kinase family. In terms of assembly, monomer. It depends on Mg(2+) as a cofactor.

It localises to the cytoplasm. The catalysed reaction is shikimate + ATP = 3-phosphoshikimate + ADP + H(+). It participates in metabolic intermediate biosynthesis; chorismate biosynthesis; chorismate from D-erythrose 4-phosphate and phosphoenolpyruvate: step 5/7. Catalyzes the specific phosphorylation of the 3-hydroxyl group of shikimic acid using ATP as a cosubstrate. The protein is Shikimate kinase of Nostoc punctiforme (strain ATCC 29133 / PCC 73102).